We begin with the raw amino-acid sequence, 132 residues long: Small ribosomal subunit protein uS8 (132 aa).

The protein belongs to the universal ribosomal protein uS8 family. Part of the 30S ribosomal subunit. Contacts proteins S5 and S12.

Functionally, one of the primary rRNA binding proteins, it binds directly to 16S rRNA central domain where it helps coordinate assembly of the platform of the 30S subunit. This is Small ribosomal subunit protein uS8 from Brucella abortus (strain S19).